Reading from the N-terminus, the 502-residue chain is MEFKDLIASLNIDAVLPEAIIICSSLFILIIDLIFQRRANAVLPYMAILGLILSMLSLLFQWNGKEVTAFLGSFQTDSLSIAFRLLIALSSMLCVLLSIEYLENSKKTLSEFLVIFLTATLGAMLLCGSNDILMIFLSLETLGLCSYILTGYMKKDIRSNEASIKYLLIGAASSSILLYGFSLLYGLSHGHIEIHEIAANLIKDQNGNSLASLVALALIIVGISFKIAAAPFHQWAPDVYEGAPTPVVAFLSVSSKAAGLMLATRIMTILFPYIINEWHNIFQILAILSMAIGNIIAISQTNIKRMLGYSSIAQAGFLLVGLLAGNINGYSSMLVYMLIYLFMNLGAFACVILFSLKTGSDQIRDYGGLYLKDPILALCLSICLLSLGGIPPFGGFFGKLYLFWAGWEAGSYLLVFVGLLTSVISIFYYIKIIKMMIIKESPEVSFAIKNYSQKRWSIKDITPIEVSILICVIGTTISGIFVNPIISIAQQTVIDSSWLMAI.

14 helical membrane passes run 15-35 (VLPEAIIICSSLFILIIDLIF), 42-62 (VLPYMAILGLILSMLSLLFQW), 79-99 (LSIAFRLLIALSSMLCVLLSI), 108-128 (TLSEFLVIFLTATLGAMLLCG), 132-152 (ILMIFLSLETLGLCSYILTGY), 167-187 (LLIGAASSSILLYGFSLLYGL), 210-230 (LASLVALALIIVGISFKIAAA), 253-275 (VSSKAAGLMLATRIMTILFPYII), 278-298 (WHNIFQILAILSMAIGNIIAI), 307-327 (LGYSSIAQAGFLLVGLLAGNI), 334-354 (LVYMLIYLFMNLGAFACVILF), 375-395 (ILALCLSICLLSLGGIPPFGG), 413-433 (LLVFVGLLTSVISIFYYIKII), and 468-488 (ILICVIGTTISGIFVNPIISI).

The protein belongs to the complex I subunit 2 family. As to quaternary structure, NDH is composed of at least 16 different subunits, 5 of which are encoded in the nucleus.

It is found in the plastid. The protein resides in the chloroplast thylakoid membrane. It carries out the reaction a plastoquinone + NADH + (n+1) H(+)(in) = a plastoquinol + NAD(+) + n H(+)(out). The enzyme catalyses a plastoquinone + NADPH + (n+1) H(+)(in) = a plastoquinol + NADP(+) + n H(+)(out). Functionally, NDH shuttles electrons from NAD(P)H:plastoquinone, via FMN and iron-sulfur (Fe-S) centers, to quinones in the photosynthetic chain and possibly in a chloroplast respiratory chain. The immediate electron acceptor for the enzyme in this species is believed to be plastoquinone. Couples the redox reaction to proton translocation, and thus conserves the redox energy in a proton gradient. This Mesostigma viride (Green alga) protein is NAD(P)H-quinone oxidoreductase subunit 2, chloroplastic.